The chain runs to 634 residues: DNA-directed RNA polymerase subunit gamma (634 aa).

Zn(2+) contacts are provided by Cys74, Cys76, Cys89, and Cys92. Residues Asp471, Asp473, and Asp475 each contribute to the Mg(2+) site.

The protein belongs to the RNA polymerase beta' chain family. RpoC1 subfamily. In terms of assembly, in cyanobacteria the RNAP catalytic core is composed of 2 alpha, 1 beta, 1 beta', 1 gamma and 1 omega subunit. When a sigma factor is associated with the core the holoenzyme is formed, which can initiate transcription. The cofactor is Mg(2+). Zn(2+) serves as cofactor.

The catalysed reaction is RNA(n) + a ribonucleoside 5'-triphosphate = RNA(n+1) + diphosphate. In terms of biological role, DNA-dependent RNA polymerase catalyzes the transcription of DNA into RNA using the four ribonucleoside triphosphates as substrates. The protein is DNA-directed RNA polymerase subunit gamma of Prochlorococcus marinus (strain SARG / CCMP1375 / SS120).